Here is a 269-residue protein sequence, read N- to C-terminus: Phosphate import ATP-binding protein PstB 2 (269 aa).

Residues 23 to 264 (LEVKDLSIYY…PKKQKTEDYI (242 aa)) enclose the ABC transporter domain. 55-62 (GPSGCGKS) contributes to the ATP binding site.

This sequence belongs to the ABC transporter superfamily. Phosphate importer (TC 3.A.1.7) family. The complex is composed of two ATP-binding proteins (PstB), two transmembrane proteins (PstC and PstA) and a solute-binding protein (PstS).

Its subcellular location is the cell membrane. The enzyme catalyses phosphate(out) + ATP + H2O = ADP + 2 phosphate(in) + H(+). Part of the ABC transporter complex PstSACB involved in phosphate import. Responsible for energy coupling to the transport system. The polypeptide is Phosphate import ATP-binding protein PstB 2 (Bacillus subtilis (strain 168)).